The following is a 96-amino-acid chain: Small ribosomal subunit protein uS15 (96 aa).

It belongs to the universal ribosomal protein uS15 family. In terms of assembly, part of the 30S ribosomal subunit. Forms a bridge to the 50S subunit in the 70S ribosome, contacting the 23S rRNA.

In terms of biological role, one of the primary rRNA binding proteins, it binds directly to 16S rRNA where it helps nucleate assembly of the platform of the 30S subunit by binding and bridging several RNA helices of the 16S rRNA. Its function is as follows. Forms an intersubunit bridge (bridge B4) with the 23S rRNA of the 50S subunit in the ribosome. The sequence is that of Small ribosomal subunit protein uS15 from Streptomyces griseus subsp. griseus (strain JCM 4626 / CBS 651.72 / NBRC 13350 / KCC S-0626 / ISP 5235).